The following is a 243-amino-acid chain: Pyridoxine 5'-phosphate synthase (243 aa).

Asn9 serves as a coordination point for 3-amino-2-oxopropyl phosphate. Residue 11 to 12 (DH) participates in 1-deoxy-D-xylulose 5-phosphate binding. Arg20 is a 3-amino-2-oxopropyl phosphate binding site. His45 (proton acceptor) is an active-site residue. 1-deoxy-D-xylulose 5-phosphate contacts are provided by Arg47 and His52. Glu72 acts as the Proton acceptor in catalysis. Thr102 is a 1-deoxy-D-xylulose 5-phosphate binding site. Catalysis depends on His193, which acts as the Proton donor. 3-amino-2-oxopropyl phosphate-binding positions include Gly194 and 215 to 216 (GH).

Belongs to the PNP synthase family. Homooctamer; tetramer of dimers.

The protein resides in the cytoplasm. It carries out the reaction 3-amino-2-oxopropyl phosphate + 1-deoxy-D-xylulose 5-phosphate = pyridoxine 5'-phosphate + phosphate + 2 H2O + H(+). Its pathway is cofactor biosynthesis; pyridoxine 5'-phosphate biosynthesis; pyridoxine 5'-phosphate from D-erythrose 4-phosphate: step 5/5. Its function is as follows. Catalyzes the complicated ring closure reaction between the two acyclic compounds 1-deoxy-D-xylulose-5-phosphate (DXP) and 3-amino-2-oxopropyl phosphate (1-amino-acetone-3-phosphate or AAP) to form pyridoxine 5'-phosphate (PNP) and inorganic phosphate. In Yersinia pseudotuberculosis serotype I (strain IP32953), this protein is Pyridoxine 5'-phosphate synthase.